A 516-amino-acid polypeptide reads, in one-letter code: Acetylcholine receptor subunit alpha-like (516 aa).

Positions 1-21 are cleaved as a signal peptide; that stretch reads MRSVTKYYLHGVVLFATGCAG. Topologically, residues 22–243 are extracellular; that stretch reads NPDAKRLYDD…ITMRRKTLFY (222 aa). 2 N-linked (GlcNAc...) asparagine glycosylation sites follow: Asn45 and Asn132. 2 disulfides stabilise this stretch: Cys149–Cys163 and Cys222–Cys223. The N-linked (GlcNAc...) asparagine glycan is linked to Asn233. Helical transmembrane passes span 244–264, 274–294, and 306–326; these read TVNLIIPCMGISFLTVLVFYL, LSISILLSLTVFFLLLAEIIP, and FVLFTMILDTFSICVTVVVLN. Over 327-465 the chain is Cytoplasmic; it reads VHFRSPQTHT…WKYVAMVLDR (139 aa). Residues 466 to 486 traverse the membrane as a helical segment; the sequence is PFLWIFTLAVVVGSAGIILQA.

The protein belongs to the ligand-gated ion channel (TC 1.A.9) family. Acetylcholine receptor (TC 1.A.9.1) subfamily.

It is found in the postsynaptic cell membrane. Its subcellular location is the cell membrane. After binding acetylcholine, the AChR responds by an extensive change in conformation that affects all subunits and leads to opening of an ion-conducting channel across the plasma membrane. The sequence is that of Acetylcholine receptor subunit alpha-like (ARA1) from Manduca sexta (Tobacco hawkmoth).